The primary structure comprises 187 residues: DNA-directed RNA polymerase subunit Rpo7 (187 aa).

Residues 82 to 166 (YELIEGEVVD…RGSKIALTMR (85 aa)) enclose the S1 motif domain.

Belongs to the eukaryotic RPB7/RPC8 RNA polymerase subunit family. As to quaternary structure, part of the RNA polymerase complex. Forms a stalk with Rpo4 that extends from the main structure.

It localises to the cytoplasm. It catalyses the reaction RNA(n) + a ribonucleoside 5'-triphosphate = RNA(n+1) + diphosphate. Functionally, DNA-dependent RNA polymerase (RNAP) catalyzes the transcription of DNA into RNA using the four ribonucleoside triphosphates as substrates. This chain is DNA-directed RNA polymerase subunit Rpo7, found in Methanocaldococcus jannaschii (strain ATCC 43067 / DSM 2661 / JAL-1 / JCM 10045 / NBRC 100440) (Methanococcus jannaschii).